The following is a 67-amino-acid chain: Large ribosomal subunit protein uL29 (67 aa).

The protein belongs to the universal ribosomal protein uL29 family.

The sequence is that of Large ribosomal subunit protein uL29 from Desulfitobacterium hafniense (strain Y51).